The following is a 153-amino-acid chain: Agglutinin (153 aa).

Beta-D-galactosyl-(1-&gt;3)-N-acetyl-D-galactosamine-binding positions include 22–25 and asparagine 46; that span reads NAWE. One can recognise a Ricin B-type lectin domain in the interval 58-153; sequence GDSAEYLIIN…DNQKWYFDAK (96 aa).

Homodimer.

In terms of biological role, lectin that primarily recognizes glycans with a non-reducing terminal N-acetylgalactosamine (GalNAc), with a preference for the alpha- over the beta-anomer. Can also bind non-reducing terminal galactose (Gal) residues but with a lower affinity. Strongly interacts with glycolipid type glycans with terminal non-reducing Gal or GalNAc but fails to bind sialylated or fucosylated forms of the same glycans. Strongly interacts with galactosylated N-glycans, displaying highest affinity for alpha-1-3 branched mono-antennary N-glycans but also binding to multi-antennary glycans. This is Agglutinin from Sclerotinia sclerotiorum (strain ATCC 18683 / 1980 / Ss-1) (White mold).